Reading from the N-terminus, the 1104-residue chain is MDAPFESGDSSATVVAEAVNNQFGGLSLKESNTNAPVLPSQTTSNHRVQNLVWKPKSYGTVSGSSSATEVGKTSAVSQIGSSGDTKVGLNLSKIFGGNLLEKFSVDKSTYCHAQIRATFYPKFENEKTDQEIRTRMIEMVSKGLATLEVSLKHSGSLFMYAGHKGGAYAKNSFGNIYTAVGVFVLSRMFREAWGTKAPKKEAEFNDFLEKNRMCISMELVTAVLGDHGQRPLDDYVVVTAVTELGNGKPQFYSTSEIISFCRKWRLPTNHVWLFSTRKSVTSFFAAFDALCEEGIATSVCRALDEVADISVPASKDHVKVQGEILEGLVARIVSSQSSRDMENVLRDHPPPPCDGANLDLGLSLREICAAHRSNEKQQMRALLRSVGPSFCPSDVEWFGDESHPKSADKSVITKFLQSQPADYSTSKLQEMVRLMKEKRLPAAFKCYHNFHRAEDISPDNLFYKLVVHVHSDSGFRRYHKEMRHMPSLWPLYRGFFVDINLFKSNKGRDLMALKSIDNASENDGRGEKDGLADDDANLMIKMKFLTYKLRTFLIRNGLSILFKDGAAAYKTYYLRQMKIWGTSDGKQKELCKMLDEWAAYIRRKCGNDQLSSSTYLSEAEPFLEQYAKRSPKNHILIGSAGNLVRTEDFLAIVDGDLDEEGDLVKKQGVTPATPEPAVKEAVQKDEGLIVFFPGIPGSAKSALCKELLNAPGGFGDDRPVHTLMGDLVKGKYWPKVADERRKKPQSIMLADKNAPNEDVWRQIEDMCRRTRASAVPIVADSEGTDTNPYSLDALAVFMFRVLQRVNHPGKLDKESSNAGYVLLMFYHLYEGKNRNEFESELIERFGSLIKMPLLKSDRTPLPDPVKSVLEEGIDLFNLHSRRHGRLESTKGTYAAEWTKWEKQLRDTLVANSEYLSSIQVPFESMVHQVREELKTIAKGDYKPPSSEKRKHGSIVFAAINLPATQVHSLLEKLAAANPTMRSFLEGKKKSIQEKLERSHVTLAHKRSHGVATVASYSQHLNREVPVELTELIYNDKMAALTAHVGSVDGETVVSKNEWPHVTLWTAEGVTAKEANTLPQLYLEGKASRLVIDPPVSISGPLEFF.

Lys152 (N6-AMP-lysine intermediate) is an active-site residue.

It belongs to the TRL1 family. Mg(2+) is required as a cofactor. In terms of tissue distribution, mainly expressed in proliferating cells and tissues such as root meristems, the vasculature of developing plantlets, flowers and elongating tissue.

The protein localises to the nucleus. It is found in the cytoplasm. It catalyses the reaction ATP + (ribonucleotide)n-3'-hydroxyl + 5'-phospho-(ribonucleotide)m = (ribonucleotide)n+m + AMP + diphosphate.. With respect to regulation, requires the presence of NTP, preferentially ATP rather than dATP, UTP, CTP and GTP, respectively, to mediate ribonucleotide 5'-phosphorylation. Functionally, essential component of stress-response pathways entailing repair of RNA breaks with 2',3'-cyclic phosphate and 5'-OH ends. Tri-functional enzyme that repairs RNA breaks with 2',3'-cyclic-PO(4) and 5'-OH ends. The ligation activity requires three sequential enzymatic activities: opening of the 2'3'-cyclic phosphodiester bond of the 5' half-tRNA leaving a 2'-phosphomonoester (CPDase activity), phosphorylation of the 5' terminus of the 3' half-tRNA in the presence of ATP (kinase activity) and ligation of the two tRNA halves in an ATP-dependent reaction (ligase activity). Deficient in transferring AMP to pRNA(OH) to form AppRNA(OH) but proficient at sealing pre-adenylylated AppRNA(OH). CPDase and kinase reactions are almost insensitive to RNA length, whereas the ligase activity decreases with shorter RNA size. Can also splice DNA ended by a single 3'-terminal ribonucleoside 2',3'-cyclic-PO(4). Binds to mRNA, mature and immature. Exhibits tRNA ligase activity in vitro. Required for the splicing of precursor tRNA molecules containing introns. Can circularize an intron cleaved from a pre-tRNA by splicing endonuclease in vitro. Seems not involved in unfolded protein response (UPR) in the endoplasmic reticulum. Involved in auxin signaling and polar transport during organ morphogenesis. This chain is tRNA ligase 1, found in Arabidopsis thaliana (Mouse-ear cress).